Reading from the N-terminus, the 565-residue chain is Phosphomethylpyrimidine synthase (565 aa).

Substrate contacts are provided by residues N203, M232, Y261, H297, 317–319 (SRG), 358–361 (DGLR), and E397. H401 lines the Zn(2+) pocket. Y424 contacts substrate. H465 provides a ligand contact to Zn(2+). The [4Fe-4S] cluster site is built by C541, C544, and C549.

It belongs to the ThiC family. [4Fe-4S] cluster is required as a cofactor.

The enzyme catalyses 5-amino-1-(5-phospho-beta-D-ribosyl)imidazole + S-adenosyl-L-methionine = 4-amino-2-methyl-5-(phosphooxymethyl)pyrimidine + CO + 5'-deoxyadenosine + formate + L-methionine + 3 H(+). It functions in the pathway cofactor biosynthesis; thiamine diphosphate biosynthesis. Functionally, catalyzes the synthesis of the hydroxymethylpyrimidine phosphate (HMP-P) moiety of thiamine from aminoimidazole ribotide (AIR) in a radical S-adenosyl-L-methionine (SAM)-dependent reaction. The sequence is that of Phosphomethylpyrimidine synthase from Bacteroides thetaiotaomicron (strain ATCC 29148 / DSM 2079 / JCM 5827 / CCUG 10774 / NCTC 10582 / VPI-5482 / E50).